The primary structure comprises 89 residues: Small ribosomal subunit protein uS15 (89 aa).

Belongs to the universal ribosomal protein uS15 family. As to quaternary structure, part of the 30S ribosomal subunit. Forms a bridge to the 50S subunit in the 70S ribosome, contacting the 23S rRNA.

One of the primary rRNA binding proteins, it binds directly to 16S rRNA where it helps nucleate assembly of the platform of the 30S subunit by binding and bridging several RNA helices of the 16S rRNA. In terms of biological role, forms an intersubunit bridge (bridge B4) with the 23S rRNA of the 50S subunit in the ribosome. This chain is Small ribosomal subunit protein uS15, found in Caulobacter vibrioides (strain NA1000 / CB15N) (Caulobacter crescentus).